The primary structure comprises 673 residues: DNA ligase (673 aa).

Residues 35–39 (DAEYD), 84–85 (SL), and glutamate 115 each bind NAD(+). The active-site N6-AMP-lysine intermediate is the lysine 117. Residues arginine 138, glutamate 175, lysine 292, and lysine 316 each coordinate NAD(+). Positions 410, 413, 428, and 434 each coordinate Zn(2+). The 82-residue stretch at 592 to 673 (PRKLPLQGLV…FLDLLERGRP (82 aa)) folds into the BRCT domain.

The protein belongs to the NAD-dependent DNA ligase family. LigA subfamily. Requires Mg(2+) as cofactor. It depends on Mn(2+) as a cofactor.

The enzyme catalyses NAD(+) + (deoxyribonucleotide)n-3'-hydroxyl + 5'-phospho-(deoxyribonucleotide)m = (deoxyribonucleotide)n+m + AMP + beta-nicotinamide D-nucleotide.. DNA ligase that catalyzes the formation of phosphodiester linkages between 5'-phosphoryl and 3'-hydroxyl groups in double-stranded DNA using NAD as a coenzyme and as the energy source for the reaction. It is essential for DNA replication and repair of damaged DNA. The protein is DNA ligase of Methylococcus capsulatus (strain ATCC 33009 / NCIMB 11132 / Bath).